Here is a 177-residue protein sequence, read N- to C-terminus: N-acetylmuramoyl-L-alanine amidase A (177 aa).

In terms of domain architecture, N-acetylmuramoyl-L-alanine amidase spans Gln-23–Gly-158. A disulfide bridge connects residues Cys-114 and Cys-121.

The protein resides in the secreted. The enzyme catalyses Hydrolyzes the link between N-acetylmuramoyl residues and L-amino acid residues in certain cell-wall glycopeptides.. In terms of biological role, antibacterial activity against Gram-positive bacteria M.luteus, S.aureus, E.faecalis and P.acidilactici and Gram-negative bacterium E.coli. In Achromobacter lyticus, this protein is N-acetylmuramoyl-L-alanine amidase A (cwhA).